Reading from the N-terminus, the 320-residue chain is Cytochrome f (320 aa).

The N-terminal stretch at 1 to 35 is a signal peptide; it reads MQTRNTFSWIKEEITRSISVSLMIYIITGASISNA. Residues Tyr-36, Cys-56, Cys-59, and His-60 each coordinate heme. A helical transmembrane segment spans residues 286–306; it reads VQGLLFFLASIVFAQIFLVLK.

The protein belongs to the cytochrome f family. In terms of assembly, the 4 large subunits of the cytochrome b6-f complex are cytochrome b6, subunit IV (17 kDa polypeptide, petD), cytochrome f and the Rieske protein, while the 4 small subunits are PetG, PetL, PetM and PetN. The complex functions as a dimer. The cofactor is heme.

It is found in the plastid. The protein localises to the chloroplast thylakoid membrane. In terms of biological role, component of the cytochrome b6-f complex, which mediates electron transfer between photosystem II (PSII) and photosystem I (PSI), cyclic electron flow around PSI, and state transitions. In Gossypium hirsutum (Upland cotton), this protein is Cytochrome f.